The primary structure comprises 142 residues: Large ribosomal subunit protein uL11 (142 aa).

It belongs to the universal ribosomal protein uL11 family. As to quaternary structure, part of the ribosomal stalk of the 50S ribosomal subunit. Interacts with L10 and the large rRNA to form the base of the stalk. L10 forms an elongated spine to which L12 dimers bind in a sequential fashion forming a multimeric L10(L12)X complex. In terms of processing, one or more lysine residues are methylated.

Its function is as follows. Forms part of the ribosomal stalk which helps the ribosome interact with GTP-bound translation factors. The polypeptide is Large ribosomal subunit protein uL11 (Nocardioides sp. (strain ATCC BAA-499 / JS614)).